We begin with the raw amino-acid sequence, 57 residues long: Cytochrome b-c1 complex subunit 10, mitochondrial (57 aa).

At 1–23 the chain is on the mitochondrial matrix side; that stretch reads MAGTSGLLNAVKPKIQTIDIQAA. A helical membrane pass occupies residues 24 to 44; the sequence is AGWGIAAAAGAIWVVQPFGWI. Residues 45–57 lie on the Mitochondrial intermembrane side of the membrane; it reads KKTFIDPPPTEEK.

It belongs to the UQCR11/QCR10 family. Component of the ubiquinol-cytochrome c oxidoreductase (cytochrome b-c1 complex, complex III, CIII), a multisubunit enzyme composed of 10 subunits. The complex is composed of 3 respiratory subunits cytochrome b (MT-CYB), cytochrome c1 (CYC1-1 or CYC1-2) and Rieske protein (UCR1-1 or UCR1-2), 2 core protein subunits MPPalpha1 (or MPPalpha2) and MPPB, and 5 low-molecular weight protein subunits QCR7-1 (or QCR7-2), UCRQ-1 (or UCRQ-2), QCR9, UCRY and probably QCR6-1 (or QCR6-2). The complex exists as an obligatory dimer and forms supercomplexes (SCs) in the inner mitochondrial membrane with NADH-ubiquinone oxidoreductase (complex I, CI), resulting in different assemblies (supercomplexes SCI(1)III(2) and SCI(2)III(4)).

Its subcellular location is the mitochondrion inner membrane. Component of the ubiquinol-cytochrome c oxidoreductase, a multisubunit transmembrane complex that is part of the mitochondrial electron transport chain which drives oxidative phosphorylation. The respiratory chain contains 3 multisubunit complexes succinate dehydrogenase (complex II, CII), ubiquinol-cytochrome c oxidoreductase (cytochrome b-c1 complex, complex III, CIII) and cytochrome c oxidase (complex IV, CIV), that cooperate to transfer electrons derived from NADH and succinate to molecular oxygen, creating an electrochemical gradient over the inner membrane that drives transmembrane transport and the ATP synthase. The cytochrome b-c1 complex catalyzes electron transfer from ubiquinol to cytochrome c, linking this redox reaction to translocation of protons across the mitochondrial inner membrane, with protons being carried across the membrane as hydrogens on the quinol. In the process called Q cycle, 2 protons are consumed from the matrix, 4 protons are released into the intermembrane space and 2 electrons are passed to cytochrome c. The polypeptide is Cytochrome b-c1 complex subunit 10, mitochondrial (UCRY) (Arabidopsis thaliana (Mouse-ear cress)).